Here is a 258-residue protein sequence, read N- to C-terminus: Snake venom serine protease CL2 (258 aa).

The N-terminal stretch at 1-18 (MVLIRVLANLLIIQLSYA) is a signal peptide. The propeptide occupies 19–24 (QKSSEL). The region spanning 25–249 (VIGGDECNIN…YTDWIKSIIA (225 aa)) is the Peptidase S1 domain. 6 disulfides stabilise this stretch: Cys31/Cys163, Cys50/Cys66, Cys98/Cys256, Cys142/Cys210, Cys174/Cys189, and Cys200/Cys225. Asn44 is a glycosylation site (N-linked (GlcNAc...) asparagine). His65 serves as the catalytic Charge relay system. A glycan (N-linked (GlcNAc...) asparagine) is linked at Asn103. Catalysis depends on Asp110, which acts as the Charge relay system. A glycan (N-linked (GlcNAc...) asparagine) is linked at Asn121. Residue Ser204 is the Charge relay system of the active site. Residue Asn251 is glycosylated (N-linked (GlcNAc...) asparagine).

Belongs to the peptidase S1 family. Snake venom subfamily. In terms of assembly, monomer. Expressed by the venom gland.

It is found in the secreted. Functionally, snake venom serine protease that may act in the hemostasis system of the prey. The polypeptide is Snake venom serine protease CL2 (Trimeresurus stejnegeri (Chinese green tree viper)).